An 89-amino-acid polypeptide reads, in one-letter code: MAKKSKVAKHERQQALVEQYAELRRTLKAEGRYDELRKLPRDSSPSRLHNRCELTGRPHGYMRKFGISRIRFRELAHQGQLPGVTKASW.

The protein belongs to the universal ribosomal protein uS14 family. Part of the 30S ribosomal subunit. Contacts proteins S3 and S10.

In terms of biological role, binds 16S rRNA, required for the assembly of 30S particles and may also be responsible for determining the conformation of the 16S rRNA at the A site. The protein is Small ribosomal subunit protein uS14A of Listeria monocytogenes serotype 4b (strain F2365).